Reading from the N-terminus, the 602-residue chain is Elongation factor 4 (602 aa).

The tr-type G domain occupies 7–190; it reads KHIRNFCIVA…AVVQKVPAPS (184 aa). GTP-binding positions include 19–24 and 137–140; these read DHGKST and NKID.

Belongs to the TRAFAC class translation factor GTPase superfamily. Classic translation factor GTPase family. LepA subfamily.

The protein localises to the cell membrane. It catalyses the reaction GTP + H2O = GDP + phosphate + H(+). Functionally, required for accurate and efficient protein synthesis under certain stress conditions. May act as a fidelity factor of the translation reaction, by catalyzing a one-codon backward translocation of tRNAs on improperly translocated ribosomes. Back-translocation proceeds from a post-translocation (POST) complex to a pre-translocation (PRE) complex, thus giving elongation factor G a second chance to translocate the tRNAs correctly. Binds to ribosomes in a GTP-dependent manner. The chain is Elongation factor 4 from Clostridium acetobutylicum (strain ATCC 824 / DSM 792 / JCM 1419 / IAM 19013 / LMG 5710 / NBRC 13948 / NRRL B-527 / VKM B-1787 / 2291 / W).